A 365-amino-acid chain; its full sequence is Probable ethanolamine-phosphate cytidylyltransferase (365 aa).

The tract at residues 344 to 365 (EERQRRKMGKNATEQTTIKTYA) is disordered. Residues 355–365 (ATEQTTIKTYA) are compositionally biased toward polar residues.

The protein belongs to the cytidylyltransferase family.

It catalyses the reaction phosphoethanolamine + CTP + H(+) = CDP-ethanolamine + diphosphate. Its pathway is phospholipid metabolism; phosphatidylethanolamine biosynthesis; phosphatidylethanolamine from ethanolamine: step 2/3. The protein is Probable ethanolamine-phosphate cytidylyltransferase of Schizosaccharomyces pombe (strain 972 / ATCC 24843) (Fission yeast).